We begin with the raw amino-acid sequence, 661 residues long: Serine/threonine-protein phosphatase rdgC (661 aa).

The region spanning 7-32 is the IQ domain; sequence RAAIFIQKWYRRHQARREMQRRCNWQ. Residues 105–413 are catalytic; sequence IDLLIDVFRK…HFVQYISAAS (309 aa). Residues Asp-158, His-160, Asp-187, and Asn-219 each coordinate Mn(2+). The active-site Proton donor is the His-220. Mn(2+) contacts are provided by His-271 and His-360. 3 consecutive EF-hand domains span residues 441–476, 526–561, and 566–601; these read DHRDELEDEFRKYDPKDSGYISISHWCKVMENVTKL, ANKASLVAIFNIIDADNSGEITLDEFETAIDLLVAH, and YSKAEMLEKCRMMDLNGDGKVDLNEFLEAFRLSDLH. Ca(2+)-binding residues include Asp-539, Asp-541, Ser-543, Glu-545, Glu-550, Asp-579, Asn-581, Asp-583, Lys-585, and Glu-590. The interval 606-625 is disordered; that stretch reads QDENIRRRSTGRPSVAKTAT.

It belongs to the PPP phosphatase family. Requires Mn(2+) as cofactor. As to expression, expressed in the visual system of the fly, as well as in the mushroom bodies of the central brain.

The enzyme catalyses O-phospho-L-seryl-[protein] + H2O = L-seryl-[protein] + phosphate. It carries out the reaction O-phospho-L-threonyl-[protein] + H2O = L-threonyl-[protein] + phosphate. Phosphatase required to prevent light-induced retinal degeneration. The polypeptide is Serine/threonine-protein phosphatase rdgC (rdgC) (Drosophila melanogaster (Fruit fly)).